A 125-amino-acid chain; its full sequence is Small ribosomal subunit protein uS12 (125 aa).

Residues 9–28 (RSERSKLKKKTKSPALKQCP) are disordered. At D89 the chain carries 3-methylthioaspartic acid. The tract at residues 104–125 (AQGVKDRKQGRSKYGTKRPKKA) is disordered. Positions 113-125 (GRSKYGTKRPKKA) are enriched in basic residues.

This sequence belongs to the universal ribosomal protein uS12 family. As to quaternary structure, part of the 30S ribosomal subunit. Contacts proteins S8 and S17. May interact with IF1 in the 30S initiation complex.

Functionally, with S4 and S5 plays an important role in translational accuracy. Interacts with and stabilizes bases of the 16S rRNA that are involved in tRNA selection in the A site and with the mRNA backbone. Located at the interface of the 30S and 50S subunits, it traverses the body of the 30S subunit contacting proteins on the other side and probably holding the rRNA structure together. The combined cluster of proteins S8, S12 and S17 appears to hold together the shoulder and platform of the 30S subunit. This Rippkaea orientalis (strain PCC 8801 / RF-1) (Cyanothece sp. (strain PCC 8801)) protein is Small ribosomal subunit protein uS12.